Reading from the N-terminus, the 441-residue chain is MSKVTPQPKIGFVSLGCPKNLVDSERILTELRTEGYDVVPSYDDADMVIVNTCGFIDSAVQESLEAIGEALNENGKVIVTGCLGAKEDQIREVHPKVLEITGPHSYEQVLEHVHHYVPKPKHNPFLSLVPEQGVKLTPRHYAYLKISEGCNHRCTFCIIPSMRGDLVSRPIGEVLSEAKRLVDAGVKEILVISQDTSAYGVDVKHRTGFHNGEPVKTSMVSLCEQLSKLGIWTRLHYVYPYPHVDDVIPLMAEGKILPYLDIPLQHASPRILKLMKRPGSVDRQLARIKQWREICPELTLRSTFIVGFPSETEEDFQMLLDFLKEARLDRVGCFKYSPVEGADANALPDQVPEEVKEERWNRFMQLQQQISAERLQEKVGREILVIIDEVDEEGAIGRSMADAPEIDGAVYLNGETNVKPGDILRVKVEHADEYDLWGSRV.

Residues proline 8–proline 118 form the MTTase N-terminal domain. [4Fe-4S] cluster contacts are provided by cysteine 17, cysteine 53, cysteine 82, cysteine 150, cysteine 154, and cysteine 157. A Radical SAM core domain is found at leucine 136–glutamate 373. Positions glutamine 376–valine 441 constitute a TRAM domain.

The protein belongs to the methylthiotransferase family. RimO subfamily. It depends on [4Fe-4S] cluster as a cofactor.

The protein localises to the cytoplasm. The catalysed reaction is L-aspartate(89)-[ribosomal protein uS12]-hydrogen + (sulfur carrier)-SH + AH2 + 2 S-adenosyl-L-methionine = 3-methylsulfanyl-L-aspartate(89)-[ribosomal protein uS12]-hydrogen + (sulfur carrier)-H + 5'-deoxyadenosine + L-methionine + A + S-adenosyl-L-homocysteine + 2 H(+). In terms of biological role, catalyzes the methylthiolation of an aspartic acid residue of ribosomal protein uS12. The sequence is that of Ribosomal protein uS12 methylthiotransferase RimO from Shigella sonnei (strain Ss046).